The sequence spans 370 residues: Lipoyl synthase 1, chloroplastic (370 aa).

Disordered stretches follow at residues 1 to 25 (MMQS…PVCR) and 39 to 67 (EAAP…KKPA). A chloroplast-targeting transit peptide spans 1-37 (MMQSSLARPLPRPPIRPACGNPVCRSRPGSVSVARCR). 7 residues coordinate [4Fe-4S] cluster: Cys95, Cys100, Cys106, Cys132, Cys136, Cys139, and Ser347. The Radical SAM core domain occupies 115-336 (GEGDGIATAT…KEYGESVGFR (222 aa)).

The protein belongs to the radical SAM superfamily. Lipoyl synthase family. [4Fe-4S] cluster is required as a cofactor.

The protein localises to the plastid. Its subcellular location is the chloroplast. It catalyses the reaction [[Fe-S] cluster scaffold protein carrying a second [4Fe-4S](2+) cluster] + N(6)-octanoyl-L-lysyl-[protein] + 2 oxidized [2Fe-2S]-[ferredoxin] + 2 S-adenosyl-L-methionine + 4 H(+) = [[Fe-S] cluster scaffold protein] + N(6)-[(R)-dihydrolipoyl]-L-lysyl-[protein] + 4 Fe(3+) + 2 hydrogen sulfide + 2 5'-deoxyadenosine + 2 L-methionine + 2 reduced [2Fe-2S]-[ferredoxin]. The protein operates within protein modification; protein lipoylation via endogenous pathway; protein N(6)-(lipoyl)lysine from octanoyl-[acyl-carrier-protein]: step 2/2. Its function is as follows. Catalyzes the radical-mediated insertion of two sulfur atoms into the C-6 and C-8 positions of the octanoyl moiety bound to the lipoyl domains of lipoate-dependent enzymes, thereby converting the octanoylated domains into lipoylated derivatives. This Oryza sativa subsp. indica (Rice) protein is Lipoyl synthase 1, chloroplastic.